Consider the following 700-residue polypeptide: Elongation factor G (700 aa).

One can recognise a tr-type G domain in the interval 13-288 (SKIRNIGITA…AVIDYLPAPD (276 aa)). GTP is bound by residues 22–29 (AHIDAGKT), 86–90 (DTPGH), and 140–143 (NKLD).

Belongs to the TRAFAC class translation factor GTPase superfamily. Classic translation factor GTPase family. EF-G/EF-2 subfamily.

The protein resides in the cytoplasm. In terms of biological role, catalyzes the GTP-dependent ribosomal translocation step during translation elongation. During this step, the ribosome changes from the pre-translocational (PRE) to the post-translocational (POST) state as the newly formed A-site-bound peptidyl-tRNA and P-site-bound deacylated tRNA move to the P and E sites, respectively. Catalyzes the coordinated movement of the two tRNA molecules, the mRNA and conformational changes in the ribosome. This chain is Elongation factor G, found in Gluconobacter oxydans (strain 621H) (Gluconobacter suboxydans).